The chain runs to 279 residues: ATP synthase gamma chain (279 aa).

This sequence belongs to the ATPase gamma chain family. In terms of assembly, F-type ATPases have 2 components, CF(1) - the catalytic core - and CF(0) - the membrane proton channel. CF(1) has five subunits: alpha(3), beta(3), gamma(1), delta(1), epsilon(1). CF(0) has three main subunits: a, b and c.

The protein resides in the cell membrane. Produces ATP from ADP in the presence of a proton gradient across the membrane. The gamma chain is believed to be important in regulating ATPase activity and the flow of protons through the CF(0) complex. In Mycoplasma genitalium (strain ATCC 33530 / DSM 19775 / NCTC 10195 / G37) (Mycoplasmoides genitalium), this protein is ATP synthase gamma chain.